The sequence spans 102 residues: Citrate lyase acyl carrier protein (102 aa).

Serine 14 carries the post-translational modification O-(phosphoribosyl dephospho-coenzyme A)serine.

Belongs to the CitD family. In terms of assembly, oligomer with a subunit composition of (alpha,beta,gamma)6.

It is found in the cytoplasm. Functionally, covalent carrier of the coenzyme of citrate lyase. This chain is Citrate lyase acyl carrier protein, found in Streptococcus equi subsp. zooepidemicus (strain MGCS10565).